The sequence spans 111 residues: Large ribosomal subunit protein uL24 (111 aa).

This sequence belongs to the universal ribosomal protein uL24 family. As to quaternary structure, part of the 50S ribosomal subunit.

Its function is as follows. One of two assembly initiator proteins, it binds directly to the 5'-end of the 23S rRNA, where it nucleates assembly of the 50S subunit. One of the proteins that surrounds the polypeptide exit tunnel on the outside of the subunit. In Bifidobacterium longum (strain DJO10A), this protein is Large ribosomal subunit protein uL24.